Consider the following 1316-residue polypeptide: DNA-directed RNA polymerase subunit beta' (1316 aa).

Zn(2+)-binding residues include C60, C62, C75, and C78. Mg(2+) contacts are provided by D535, D537, and D539. Positions 891, 968, 975, and 978 each coordinate Zn(2+).

This sequence belongs to the RNA polymerase beta' chain family. As to quaternary structure, the RNAP catalytic core consists of 2 alpha, 1 beta, 1 beta' and 1 omega subunit. When a sigma factor is associated with the core the holoenzyme is formed, which can initiate transcription. Mg(2+) is required as a cofactor. The cofactor is Zn(2+).

The enzyme catalyses RNA(n) + a ribonucleoside 5'-triphosphate = RNA(n+1) + diphosphate. Functionally, DNA-dependent RNA polymerase catalyzes the transcription of DNA into RNA using the four ribonucleoside triphosphates as substrates. The protein is DNA-directed RNA polymerase subunit beta' of Mycobacterium bovis (strain BCG / Tokyo 172 / ATCC 35737 / TMC 1019).